Consider the following 743-residue polypeptide: 1,4-alpha-glucan branching enzyme GlgB (743 aa).

Catalysis depends on Asp423, which acts as the Nucleophile. The Proton donor role is filled by Glu476.

This sequence belongs to the glycosyl hydrolase 13 family. GlgB subfamily. In terms of assembly, monomer.

It carries out the reaction Transfers a segment of a (1-&gt;4)-alpha-D-glucan chain to a primary hydroxy group in a similar glucan chain.. The protein operates within glycan biosynthesis; glycogen biosynthesis. Catalyzes the formation of the alpha-1,6-glucosidic linkages in glycogen by scission of a 1,4-alpha-linked oligosaccharide from growing alpha-1,4-glucan chains and the subsequent attachment of the oligosaccharide to the alpha-1,6 position. This Pseudomonas fluorescens (strain ATCC BAA-477 / NRRL B-23932 / Pf-5) protein is 1,4-alpha-glucan branching enzyme GlgB.